Consider the following 306-residue polypeptide: Phenylcoumaran benzylic ether reductase POP1 (306 aa).

NADP(+) is bound by residues Gly-9–Gly-15, Arg-34, and Lys-43. The Proton acceptor role is filled by Lys-131. Arg-135 contacts NADP(+).

The protein belongs to the NmrA-type oxidoreductase family. Isoflavone reductase subfamily.

The enzyme catalyses (-)-dehydrodiconiferyl alcohol + NADPH + H(+) = (S)-isodihydrodehydrodiconiferyl alcohol + NADP(+). The catalysed reaction is (+)-dehydrodiconiferyl alcohol + NADPH + H(+) = (R)-isodihydrodehydrodiconiferyl alcohol + NADP(+). It catalyses the reaction (2R,3S)-dihydrodehydrodiconiferyl alcohol + NADPH + H(+) = (S)-tetrahydrodehydrodiconiferyl alcohol + NADP(+). It carries out the reaction (2S,3R)-dihydrodehydrodiconiferyl alcohol + NADPH + H(+) = (R)-tetrahydrodehydrodiconiferyl alcohol + NADP(+). Oxidoreductase involved in lignan biosynthesis. Catalyzes the NADPH-dependent reduction of phenylcoumaran benzylic ethers. Converts dehydrodiconiferyl alcohol (DDC) to isodihydrodehydrodiconiferyl alcohol (IDDDC), and dihydrodehydrodiconiferyl alcohol (DDDC) to tetrahydrodehydrodiconiferyl alcohol (TDDC). This Populus trichocarpa (Western balsam poplar) protein is Phenylcoumaran benzylic ether reductase POP1.